A 152-amino-acid chain; its full sequence is Transcriptional regulator MraZ (152 aa).

SpoVT-AbrB domains follow at residues 5–52 (ASAI…PIHE) and 81–124 (AHEV…DEQA).

Belongs to the MraZ family. In terms of assembly, forms oligomers.

Its subcellular location is the cytoplasm. It localises to the nucleoid. The polypeptide is Transcriptional regulator MraZ (Shewanella sp. (strain ANA-3)).